A 338-amino-acid polypeptide reads, in one-letter code: Ketol-acid reductoisomerase (NADP(+)) (338 aa).

Residues 1-181 form the KARI N-terminal Rossmann domain; the sequence is MNVFYDKDAD…GGGRAGIIET (181 aa). NADP(+)-binding positions include 24 to 27, R47, and S52; that span reads YGSQ. H107 is an active-site residue. G133 serves as a coordination point for NADP(+). The KARI C-terminal knotted domain occupies 182 to 327; sequence NFREETETDL…AKLRAMMPWI (146 aa). 4 residues coordinate Mg(2+): D190, E194, E226, and E230. S251 is a substrate binding site.

The protein belongs to the ketol-acid reductoisomerase family. Requires Mg(2+) as cofactor.

The enzyme catalyses (2R)-2,3-dihydroxy-3-methylbutanoate + NADP(+) = (2S)-2-acetolactate + NADPH + H(+). It carries out the reaction (2R,3R)-2,3-dihydroxy-3-methylpentanoate + NADP(+) = (S)-2-ethyl-2-hydroxy-3-oxobutanoate + NADPH + H(+). The protein operates within amino-acid biosynthesis; L-isoleucine biosynthesis; L-isoleucine from 2-oxobutanoate: step 2/4. It functions in the pathway amino-acid biosynthesis; L-valine biosynthesis; L-valine from pyruvate: step 2/4. Functionally, involved in the biosynthesis of branched-chain amino acids (BCAA). Catalyzes an alkyl-migration followed by a ketol-acid reduction of (S)-2-acetolactate (S2AL) to yield (R)-2,3-dihydroxy-isovalerate. In the isomerase reaction, S2AL is rearranged via a Mg-dependent methyl migration to produce 3-hydroxy-3-methyl-2-ketobutyrate (HMKB). In the reductase reaction, this 2-ketoacid undergoes a metal-dependent reduction by NADPH to yield (R)-2,3-dihydroxy-isovalerate. This is Ketol-acid reductoisomerase (NADP(+)) from Burkholderia multivorans (strain ATCC 17616 / 249).